Reading from the N-terminus, the 304-residue chain is Aspartate carbamoyltransferase catalytic subunit (304 aa).

Residues R53 and T54 each contribute to the carbamoyl phosphate site. K82 serves as a coordination point for L-aspartate. Residues R103, H131, and Q134 each contribute to the carbamoyl phosphate site. Positions 163 and 224 each coordinate L-aspartate. Positions 263 and 264 each coordinate carbamoyl phosphate.

This sequence belongs to the aspartate/ornithine carbamoyltransferase superfamily. ATCase family. As to quaternary structure, heterooligomer of catalytic and regulatory chains.

It carries out the reaction carbamoyl phosphate + L-aspartate = N-carbamoyl-L-aspartate + phosphate + H(+). It participates in pyrimidine metabolism; UMP biosynthesis via de novo pathway; (S)-dihydroorotate from bicarbonate: step 2/3. Functionally, catalyzes the condensation of carbamoyl phosphate and aspartate to form carbamoyl aspartate and inorganic phosphate, the committed step in the de novo pyrimidine nucleotide biosynthesis pathway. The chain is Aspartate carbamoyltransferase catalytic subunit from Haloquadratum walsbyi (strain DSM 16790 / HBSQ001).